Reading from the N-terminus, the 198-residue chain is Imidazoleglycerol-phosphate dehydratase (198 aa).

This sequence belongs to the imidazoleglycerol-phosphate dehydratase family.

Its subcellular location is the cytoplasm. It carries out the reaction D-erythro-1-(imidazol-4-yl)glycerol 3-phosphate = 3-(imidazol-4-yl)-2-oxopropyl phosphate + H2O. It participates in amino-acid biosynthesis; L-histidine biosynthesis; L-histidine from 5-phospho-alpha-D-ribose 1-diphosphate: step 6/9. This Nitratidesulfovibrio vulgaris (strain DP4) (Desulfovibrio vulgaris) protein is Imidazoleglycerol-phosphate dehydratase.